We begin with the raw amino-acid sequence, 72 residues long: Toxin Acra II-1 (72 aa).

The 65-residue stretch at 3–67 (VPGNYPLNTY…VWNAAKNYCK (65 aa)) folds into the LCN-type CS-alpha/beta domain. 3 cysteine pairs are disulfide-bonded: cysteine 18/cysteine 41, cysteine 27/cysteine 46, and cysteine 31/cysteine 48.

Belongs to the long (3 C-C) scorpion toxin superfamily. Sodium channel inhibitor family. Beta subfamily. As to expression, expressed by the venom gland.

It localises to the secreted. In terms of biological role, binds to sodium channels (Nav) and affects the channel activation process. The chain is Toxin Acra II-1 from Androctonus crassicauda (Arabian fat-tailed scorpion).